A 414-amino-acid chain; its full sequence is MASAEIIAVGTELLLGQIVNSNAAFISQELAADGIYVYHHTVVGDNPARLKEVIEIAENRSDILIFTGGLGPTEDDITKQILAAHLQKQLVEDEYHMNKINEYFTSRNRAMTENNKLQAVIIEDSIVLNNDFGFAAGMYLRENNHTYVLLPGPPSEMKPMFTSYANPLLLSESGDQNILESKIMRFFGIGESQLAADLNDLIVTQVNPTIATYAGDNEVVVRITATAKTKEEASRLVKDTEEEILRRDGTFLYGYGEVSLSELVTAMLLEKELTISAAESFTAGLFQAEIARFPGISKIFKGGMVTYSEETKQSILQVSPQVIKEKGVVSAECAKEMAENVSRLCKTDIGISFTGVAGPDSLEGHPAGTIWIGLSVKGYETEAFQFVYGRDRNHNRRRAVKQGFQLIKQFLDAN.

This sequence belongs to the CinA family.

This Listeria monocytogenes serotype 4a (strain HCC23) protein is Putative competence-damage inducible protein.